We begin with the raw amino-acid sequence, 3598 residues long: Dystrophin, isoforms A/C/F/G/H (3598 aa).

Residues 1 to 230 (MEPGILIDER…YVMCLYHAME (230 aa)) are actin-binding. Calponin-homology (CH) domains lie at 12 to 116 (HIQK…LEFN) and 127 to 230 (NGVE…HAME). The segment at 233-297 (RTRQQEQEQD…SGELKTHSMR (65 aa)) is disordered. Positions 267–286 (NDQTSLGLYTSDSAGSMEQR) are enriched in polar residues. Spectrin repeat units lie at residues 307-420 (VEIS…KILM), 423-525 (AEFQ…KLQQ), 851-963 (QDFG…AIEN), 1056-1170 (SHID…LLEH), 1173-1275 (TQLG…LLEQ), and 1381-1483 (SYES…TLER). 5 disordered regions span residues 1633 to 1696 (ARNT…VMPD), 1716 to 1742 (SLNPQKVTNTPPPKPAKTKRKAPSSPA), 1799 to 1854 (EDSD…ENTS), 1878 to 1941 (RDIL…EPLV), and 2204 to 2233 (GPRISNGKERPDASSAATMSCRSEYNNEPS). A compositionally biased stretch (low complexity) spans 1663 to 1679 (SGESPSSAHTSSSESPT). A compositionally biased stretch (basic and acidic residues) spans 1803–1816 (SSVRVDSQGKEMRR). Ser-1832 and Ser-1838 each carry phosphoserine. Acidic residues predominate over residues 1834 to 1843 (NDEDSAEQEE). A compositionally biased stretch (basic and acidic residues) spans 1878 to 1893 (RDILRDSEEEEPKTPD). Positions 2218–2233 (SAATMSCRSEYNNEPS) are enriched in polar residues. Spectrin repeat units follow at residues 2237–2363 (ALAG…QLKN), 2366–2472 (SDSQ…QLHA), 2475–2576 (HSLQ…RLES), 2579–2712 (EHWN…RLDE), and 2715–2819 (TKMR…VLCQ). A disordered region spans residues 2655–2679 (VSDTSDTEANHDSDSRYMSAEEQSR). Positions 2822-2852 (AQQTHENGDDGRTTSNSGTIGPLPNLGQSVK) are disordered. The WW domain maps to 2849–2882 (QSVKPPWERATTAANVPYYIDHERETTHWDHPEM). The ZZ-type zinc finger occupies 3107–3163 (KHQAKCNICKEYPIVGFRYRCLKCFNFDMCQKCFFFGRNAKNHKLTHPMHEYCTTTT). Zn(2+) is bound by residues Cys-3112, Cys-3115, Cys-3127, Cys-3130, Cys-3136, Cys-3139, His-3149, and His-3153. Phosphoserine is present on Ser-3207. Disordered stretches follow at residues 3316 to 3344 (EQSGMPEDSNGMQHSSSSMTGLSGQGEQG), 3387 to 3449 (DEPN…KGIM), 3483 to 3545 (LHQQ…QQHL), and 3560 to 3598 (ELESINDDLEDSSSSNTTNTTTTTTTTATTEKTCVELQK). 2 stretches are compositionally biased toward polar residues: residues 3325 to 3337 (NGMQHSSSSMTGL) and 3408 to 3439 (ALNSKPNTLQTRSVTASQLNTDSPAKMNQQNG). A compositionally biased stretch (low complexity) spans 3485–3499 (QQQQQQLQQQPPQQQ). Over residues 3505 to 3523 (GNGGMDISGGMQTSGGYLG) the composition is skewed to gly residues. Positions 3534-3545 (SSLMQQQHQQHL) are enriched in low complexity. The span at 3560-3570 (ELESINDDLED) shows a compositional bias: acidic residues. The segment covering 3571–3589 (SSSSNTTNTTTTTTTTATT) has biased composition (low complexity).

Component of the dystrophin associated protein complex (DAPC). Interacts with Dg, via the Dg WW domain binding sites. Isoform A, isoform F and isoform G are expressed in the midgut endoderm of stage 12 embryos. In stage 16 embryos, expression is also seen in the pericardial cells, cells at the ectoderm segmental border and cells along the midline of the CNS. During embryogenesis, isoform A is also expressed in the visceral mesoderm, muscle attachment sites, mesectodermal cells at the midline, the gut, and throughout muscle fibers. In larvae, isoform A is found in all muscle fibers, but not detectable in the brain or neuropil.

The protein resides in the cell membrane. It is found in the sarcolemma. The protein localises to the cytoplasm. It localises to the cytoskeleton. Functionally, required for the maintenance of appropriate synaptic retrograde communication and the stabilization of muscle cell architecture or physiology. Both det and Dg are required for maintenance of early dpp signaling in the presumptive crossvein. Isoform A is not required to maintain muscle integrity, but plays a role in neuromuscular homeostasis by regulating neurotransmitter release. May play a role in anchoring the cytoskeleton to the plasma membrane. This is Dystrophin, isoforms A/C/F/G/H (Dys) from Drosophila melanogaster (Fruit fly).